A 509-amino-acid polypeptide reads, in one-letter code: MKRALLSVSDKRGLIDFAKGLIKNNYEIISTGGTLKFLTEAGVKAKAVEEITGFPEILNGRVKTLHPKIHAALLAKRENSEHMKTLEEHQITPIDLLAVNLYPFKETIEKKDVSYDQAIENIDIGGPSMLRSAAKNARDVIVVVDPDDYDSILKAIANDDLSHDFRRHLQAKTFRHTAAYDALIADYLSKEEYPEKLTVTYDKDFDLRYGENPNQTAAVYADAIPKAYSILQAKILHGKKLSYNNIKDADAALRTIADFQDQPTVVTLKHMNPAGIGQAITIEKAWDKAFYADDISIFGGIVVLNREVDLATAQKMHTIFLEIIIAPGFSEEAYQILAKKKNLRLLTVAMTNTLPKELELTSVLGGAVVQEMDRLVENAADFEVVSSAKPTDEQLEALVFAQKAVKHVKSNAILIAAQGQTLGIGAGQPNRIDSVKIAFKHAEAKKNFDQAVLASDAFFPMDDSVEFAAEHGIKAIVEPGGSIKDKDSIAMADKLGVVLVFSHNRHFRH.

Residues 1 to 144 (MKRALLSVSD…KNARDVIVVV (144 aa)) form the MGS-like domain.

Belongs to the PurH family.

It carries out the reaction (6R)-10-formyltetrahydrofolate + 5-amino-1-(5-phospho-beta-D-ribosyl)imidazole-4-carboxamide = 5-formamido-1-(5-phospho-D-ribosyl)imidazole-4-carboxamide + (6S)-5,6,7,8-tetrahydrofolate. The enzyme catalyses IMP + H2O = 5-formamido-1-(5-phospho-D-ribosyl)imidazole-4-carboxamide. It functions in the pathway purine metabolism; IMP biosynthesis via de novo pathway; 5-formamido-1-(5-phospho-D-ribosyl)imidazole-4-carboxamide from 5-amino-1-(5-phospho-D-ribosyl)imidazole-4-carboxamide (10-formyl THF route): step 1/1. It participates in purine metabolism; IMP biosynthesis via de novo pathway; IMP from 5-formamido-1-(5-phospho-D-ribosyl)imidazole-4-carboxamide: step 1/1. This chain is Bifunctional purine biosynthesis protein PurH, found in Oenococcus oeni (strain ATCC BAA-331 / PSU-1).